Reading from the N-terminus, the 1055-residue chain is Pre-mRNA-splicing factor ATP-dependent RNA helicase-like protein cdc28 (1055 aa).

A compositionally biased stretch (basic and acidic residues) spans 67 to 78 (PREGSRPKENYN). The segment at 67–184 (PREGSRPKEN…TERLNDLRER (118 aa)) is disordered. The span at 112–121 (PLKKKSRSKT) shows a compositional bias: basic residues. The span at 122–132 (PKREIARRQRD) shows a compositional bias: basic and acidic residues. The span at 133 to 145 (EDEWESDEYEEVV) shows a compositional bias: acidic residues. The span at 163–184 (QNHDYEKSSDPETERLNDLRER) shows a compositional bias: basic and acidic residues. Residues 428–592 (LKAINEYQVL…FDEAPVFYVP (165 aa)) enclose the Helicase ATP-binding domain. 441 to 448 (AETGSGKT) provides a ligand contact to ATP. Residues 539 to 542 (DEAH) carry the DEAH box motif. Residues 617–790 (TILQIHTTQP…NIVLLLKSLG (174 aa)) form the Helicase C-terminal domain.

It belongs to the DEAD box helicase family. DEAH subfamily. DDX16/PRP8 sub-subfamily.

The protein resides in the nucleus. It catalyses the reaction ATP + H2O = ADP + phosphate + H(+). In terms of biological role, involved in pre-mRNA splicing. Is required together with ATP and at least one other factor, for the first cleavage-ligation reaction. Functions as a molecular motor in the activation of the precatalytic spliceosome for the first transesterification reaction of pre-mRNA splicing by hydrolyzing ATP to cause the activation of the spliceosome without the occurrence of splicing. The chain is Pre-mRNA-splicing factor ATP-dependent RNA helicase-like protein cdc28 (cdc28) from Schizosaccharomyces pombe (strain 972 / ATCC 24843) (Fission yeast).